The chain runs to 338 residues: Mitotic spindle-associated protein SHE1 (338 aa).

Over residues 1–14 (MNDKLQEEHNEKDT) the composition is skewed to basic and acidic residues. Disordered stretches follow at residues 1-29 (MNDK…MSID), 67-88 (LKDQ…SGSY), and 116-146 (HTPK…IPYT). A compositionally biased stretch (polar residues) spans 72–88 (EQQYNGDKNNEPKSGSY). A Phosphoserine modification is found at Ser165. Disordered regions lie at residues 210 to 263 (TNSL…QGTN) and 284 to 338 (RSTS…PIWR). Low complexity predominate over residues 216–234 (INSAHRNTSSSSTASSIPR). The span at 242 to 254 (SIRDLHAKTKPVE) shows a compositional bias: basic and acidic residues. Polar residues-rich tracts occupy residues 284-297 (RSTS…GTSA) and 312-330 (SKTS…ATGT).

It belongs to the SHE1 family.

Its subcellular location is the cytoplasm. The protein resides in the cytoskeleton. It localises to the spindle. It is found in the bud neck. Functionally, may have a role related to the spindle integrity function of the DAM1 complex, which is essential for proper chromosome segregation. Causes growth arrest when highly overexpressed. In Saccharomyces cerevisiae (strain YJM789) (Baker's yeast), this protein is Mitotic spindle-associated protein SHE1 (SHE1).